Reading from the N-terminus, the 376-residue chain is Glutamate 5-kinase (376 aa).

K15 contributes to the ATP binding site. Residues S56, D143, and N155 each coordinate substrate. S175–D176 provides a ligand contact to ATP. The PUA domain occupies K281–T358.

This sequence belongs to the glutamate 5-kinase family.

Its subcellular location is the cytoplasm. The enzyme catalyses L-glutamate + ATP = L-glutamyl 5-phosphate + ADP. The protein operates within amino-acid biosynthesis; L-proline biosynthesis; L-glutamate 5-semialdehyde from L-glutamate: step 1/2. Its function is as follows. Catalyzes the transfer of a phosphate group to glutamate to form L-glutamate 5-phosphate. The sequence is that of Glutamate 5-kinase from Rhodopseudomonas palustris (strain BisB18).